Reading from the N-terminus, the 354-residue chain is Methylthioribose-1-phosphate isomerase (354 aa).

Residues Arg-58–Ala-60, Arg-101, and Gln-204 each bind substrate. The active-site Proton donor is Asp-245. Asn-255–Lys-256 serves as a coordination point for substrate.

This sequence belongs to the eIF-2B alpha/beta/delta subunits family. MtnA subfamily.

The enzyme catalyses 5-(methylsulfanyl)-alpha-D-ribose 1-phosphate = 5-(methylsulfanyl)-D-ribulose 1-phosphate. It functions in the pathway amino-acid biosynthesis; L-methionine biosynthesis via salvage pathway; L-methionine from S-methyl-5-thio-alpha-D-ribose 1-phosphate: step 1/6. Its function is as follows. Catalyzes the interconversion of methylthioribose-1-phosphate (MTR-1-P) into methylthioribulose-1-phosphate (MTRu-1-P). The chain is Methylthioribose-1-phosphate isomerase from Xylella fastidiosa (strain 9a5c).